The sequence spans 367 residues: Homoserine O-acetyltransferase (367 aa).

The region spanning 41-339 is the AB hydrolase-1 domain; that stretch reads NLIVLEHALT…PVGHDAFLTE (299 aa). The active-site Nucleophile is the S136. R205 contacts substrate. Catalysis depends on residues D303 and H333. D334 contacts substrate.

The protein belongs to the AB hydrolase superfamily. MetX family. In terms of assembly, homodimer.

It localises to the cytoplasm. The enzyme catalyses L-homoserine + acetyl-CoA = O-acetyl-L-homoserine + CoA. Its pathway is amino-acid biosynthesis; L-methionine biosynthesis via de novo pathway; O-acetyl-L-homoserine from L-homoserine: step 1/1. Functionally, transfers an acetyl group from acetyl-CoA to L-homoserine, forming acetyl-L-homoserine. The chain is Homoserine O-acetyltransferase from Corynebacterium diphtheriae (strain ATCC 700971 / NCTC 13129 / Biotype gravis).